Here is a 308-residue protein sequence, read N- to C-terminus: Cyclin-D4-1 (308 aa).

It belongs to the cyclin family. Cyclin D subfamily. Interacts with CDKA-1, CDKB2-1, KRP4/ICK7, KRP5/ICK3, KRP6/ICK4 and KRP7/ICK5. Expressed in shoot apical meristem, leaf primordia vascular tissues and tapetum of anthers.

In terms of biological role, may activate cell cycle in the root apical meristem (RAM) and promote embryonic root (radicle) protrusion. This is Cyclin-D4-1 (CYCD4-1) from Arabidopsis thaliana (Mouse-ear cress).